We begin with the raw amino-acid sequence, 148 residues long: Large ribosomal subunit protein bL9 (148 aa).

This sequence belongs to the bacterial ribosomal protein bL9 family.

In terms of biological role, binds to the 23S rRNA. This Macrococcus caseolyticus (strain JCSC5402) (Macrococcoides caseolyticum) protein is Large ribosomal subunit protein bL9.